The chain runs to 283 residues: Reaction center protein L chain (283 aa).

Helical transmembrane passes span 33–56, 85–113, and 116–141; these read GFFG…GASQ, GLWQ…RKLG, and YHVP…LLMG. Positions 154 and 174 each coordinate (7R,8Z)-bacteriochlorophyll b. Residues 171–200 form a helical membrane-spanning segment; the sequence is NPAHMLAVTLFFTTTLALALHGGLILSACN. Histidine 191 provides a ligand contact to Fe cation. Phenylalanine 217 contacts a ubiquinone. A helical membrane pass occupies residues 226–252; sequence GTLGIHRLGYLLAINAGLWSAICIIIS. A Fe cation-binding site is contributed by histidine 231.

It belongs to the reaction center PufL/M/PsbA/D family. As to quaternary structure, reaction center is composed of four bacteriochlorophylls, two bacteriopheophytins, two ubiquinones, one iron, and three highly hydrophobic polypeptide chains (designated L, M, and H).

It localises to the cellular chromatophore membrane. Its function is as follows. The reaction center is a membrane-bound complex that mediates the initial photochemical event in the electron transfer process of photosynthesis. The polypeptide is Reaction center protein L chain (pufL) (Roseobacter denitrificans (strain ATCC 33942 / OCh 114) (Erythrobacter sp. (strain OCh 114))).